A 1345-amino-acid chain; its full sequence is MVYSYSEKKRIRKDFGKRPQVLDIPYLLSIQLDSFKKFTDQDPTGERGLEAAFRSVFPIKSFSGNSELQYVSYKLGEPVFDVKECQIRGVTYSAPLRVKLRMVLYDREAAAGTVKDIKEQEVYMGDIPLMTDNGTFVINGTERVIVSQLHRSPGVFFDHDRGKTHSSGKVLYNARIIPYRGSWLDFEFDPKDALFVRIDRRRKLPATIILRALEYSTQEILDLFFERVEFKIKKDTLVMTLVPERLRGETASYDIKDAEGTVLVEAGRRVTARHIRQLEKTNTTELEVPVEYIVGKYAAQDYIDPDTGEVLVSANSEISLEDLAKLSLAGIKELSTLYINELDHGAYISDTLRIDPTTNRLEALVEIYRMMRPGEPPTKDAAEALFQNLFFSEERYDLSKVGRMKFNRRLSIPDDEGSGVLSKEDIVAVMKNIIHIRNGFDEVDDIDHLGNRRIRSVGEMAENQFRVGLVRVERAVRERLSLGDLNELMPQDLINAKPISAAVKEFFGSSQLSQFMDQNNPLSEVTHKRRISALGPGGLTRERAGFEVRDVHPTHYGRLCPIETPEGPNIGLINSLASFARTNSYGFLETPYRKVVDGVITDEVEYLSAIEEGRYVIAQANIEVDSEGRMVEEQIACRHKGESTFMRASDIQYMDVSPQQIISVAASLIPFLEHDDANRALMGANMQRQAVPTLRSEKPLVGTGIERTLAVDSGVVVAAKRGGVIDYVDASRIVVKVNEDELRPGEAGIDIYNLTKYTRSNQNTCINQRPCCSVGEPVVRGDVLADGPSTDLGDLALGQNMRIAFMPWNGYNFEDSILISERVAQEDRFTTIHIQELSCIARDTKLGSEEITADIPNVGESALSKLDESGIVYIGAEVKGGDILVGKVTPKGETQLTPEEKLLRAIFGEKASDVKDSSLRVPNSVKGTIIDVQVFTRDGVEKDKRAIEIEEMHIAQARKDLGEEFKILEEGVLSRARNLLLSAGFSEAQIAALPRKDVLVQVIDDEAKQTELEQLAEQHEELKADFDKKFEIKRRKITQGDDLAPGVLKIVKVYLAVKRTIQPGDKMAGRHGNKGVISKINPIEDMPYDEQGNPVDIVLNPLGVPSRMNIGQVLEVHLGAAAKGIGHKIAAMLEDQREKGLAEVRNYIKQVYELGDEVQQRVDIDSFTDDELLRLANNLKGGIPVATPAFDGAKEKEIKQMLELAGLPTSGQLKLFDGRTGNEFERPVTVGYMYMLKLNHLVDDKMHARSTGSYSLVTQQPLGGKAQFGGQRFGEMEVWALEAYGAAYTLQEMLTVKSDDVNGRTQMYKNIVDGNHQMQPGMPESFNVLLKEIRSLGINIELDQE.

The protein belongs to the RNA polymerase beta chain family. The RNAP catalytic core consists of 2 alpha, 1 beta, 1 beta' and 1 omega subunit. When a sigma factor is associated with the core the holoenzyme is formed, which can initiate transcription.

The catalysed reaction is RNA(n) + a ribonucleoside 5'-triphosphate = RNA(n+1) + diphosphate. Functionally, DNA-dependent RNA polymerase catalyzes the transcription of DNA into RNA using the four ribonucleoside triphosphates as substrates. This chain is DNA-directed RNA polymerase subunit beta, found in Shewanella oneidensis (strain ATCC 700550 / JCM 31522 / CIP 106686 / LMG 19005 / NCIMB 14063 / MR-1).